The sequence spans 171 residues: UPF0398 protein M6_Spy1399 (171 aa).

Belongs to the UPF0398 family.

The chain is UPF0398 protein M6_Spy1399 from Streptococcus pyogenes serotype M6 (strain ATCC BAA-946 / MGAS10394).